A 382-amino-acid polypeptide reads, in one-letter code: Queuine tRNA-ribosyltransferase (382 aa).

The active-site Proton acceptor is the Asp93. Residues 93–97 (DSGGF), Asp147, Gln191, and Gly218 contribute to the substrate site. The segment at 249–255 (GVGKPED) is RNA binding. Asp268 (nucleophile) is an active-site residue. The RNA binding; important for wobble base 34 recognition stretch occupies residues 273 to 277 (TRNAR). Cys306, Cys308, Cys311, and His337 together coordinate Zn(2+).

It belongs to the queuine tRNA-ribosyltransferase family. Homodimer. Within each dimer, one monomer is responsible for RNA recognition and catalysis, while the other monomer binds to the replacement base PreQ1. The cofactor is Zn(2+).

The enzyme catalyses 7-aminomethyl-7-carbaguanine + guanosine(34) in tRNA = 7-aminomethyl-7-carbaguanosine(34) in tRNA + guanine. The protein operates within tRNA modification; tRNA-queuosine biosynthesis. In terms of biological role, catalyzes the base-exchange of a guanine (G) residue with the queuine precursor 7-aminomethyl-7-deazaguanine (PreQ1) at position 34 (anticodon wobble position) in tRNAs with GU(N) anticodons (tRNA-Asp, -Asn, -His and -Tyr). Catalysis occurs through a double-displacement mechanism. The nucleophile active site attacks the C1' of nucleotide 34 to detach the guanine base from the RNA, forming a covalent enzyme-RNA intermediate. The proton acceptor active site deprotonates the incoming PreQ1, allowing a nucleophilic attack on the C1' of the ribose to form the product. After dissociation, two additional enzymatic reactions on the tRNA convert PreQ1 to queuine (Q), resulting in the hypermodified nucleoside queuosine (7-(((4,5-cis-dihydroxy-2-cyclopenten-1-yl)amino)methyl)-7-deazaguanosine). This Actinobacillus pleuropneumoniae serotype 3 (strain JL03) protein is Queuine tRNA-ribosyltransferase.